Consider the following 928-residue polypeptide: Retinoblastoma-associated protein (928 aa).

Residues M1–L42 are disordered. P2 carries the post-translational modification N,N-dimethylproline. Low complexity predominate over residues K8–E19. The span at P29–P39 shows a compositional bias: acidic residues. Residue S37 is modified to Phosphoserine. S249 is modified (phosphoserine; by CDK1). The residue at position 252 (T252) is a Phosphothreonine; by CDK1. T356 carries the phosphothreonine modification. At T373 the chain carries Phosphothreonine; by CDK1. The domain A stretch occupies residues T373 to R579. The tract at residues T373–Y771 is pocket; binds T and E1A. At S567 the chain carries Phosphoserine; by CDK2. The spacer stretch occupies residues E580–Q639. S608 carries the phosphoserine modification. Residues V610 to A632 form a disordered region. S612 carries the phosphoserine; by CHEK2 and CHEK1 modification. Residues T619–A632 are compositionally biased toward polar residues. S624 bears the Phosphoserine mark. A domain B region spans residues K640–Y771. Residues R763–K928 are interaction with LIMD1. A domain C; mediates interaction with E4F1 region spans residues Y771–K928. Phosphoserine occurs at positions 780, 788, and 795. S807 is modified (phosphoserine; by CDK1 and CDK3). Residue K810 is modified to N6-methyllysine; by SMYD2. S811 is subject to Phosphoserine; by CDK1 and CDK3. At T821 the chain carries Phosphothreonine; by CDK6. Phosphothreonine is present on T823. T826 is modified (phosphothreonine; by CDK4). Phosphothreonine is present on T841. Position 855 is a phosphoserine (S855). The residue at position 860 (K860) is an N6-methyllysine; by SMYD2. Positions K860–R876 match the Bipartite nuclear localization signal motif. Residues K860–K928 are disordered. Residues K873 and K874 each carry the N6-acetyllysine; by PCAF modification. Basic and acidic residues predominate over residues K915–K928.

This sequence belongs to the retinoblastoma protein (RB) family. As to quaternary structure, the hypophosphorylated form interacts with and sequesters the E2F1 transcription factor, thereby inhibiting E2F1 transcription. Interacts with heterodimeric E2F/DP transcription factor complexes containing TFDP1 and either E2F1, E2F3, E2F4 or E2F5, or TFDP2 and E2F4. Interacts (when hyperphosphorylated and hypophosphorylated) with PKP3; the interaction inhibits RB1 interaction with and repression of the transcription factor E2F1, potentially via sequestering RB1 to the cytoplasm. The unphosphorylated form interacts with EID1, ARID3B, KDM5A, SUV39H1, MJD2A/JHDM3A and THOC1. Interacts with the N-terminal domain of TAF1. Interacts with SNW1, ATAD5, AATF, DNMT1, LIN9, LMNA, KMT5B, KMT5C, PELP1, UHRF2 and TMPO-alpha. Interacts with GRIP1 and UBR4. Interacts with ARID4A and KDM5B. Interacts with E4F1 and LIMD1. Interacts with SMARCA4/BRG1 and HDAC1. Interacts with PSMA3 and USP4. Interacts (when methylated at Lys-860) with L3MBTL1. Interacts with CHEK2; phosphorylates RB1. Interacts with CDK1 and CDK2. Interacts with PRMT2. Interacts with CEBPA. P-TEFB complex interacts with RB1; promotes phosphorylation of RB1. Interacts with RBBP9; the interaction disrupts RB1 binding to E2F1. Interacts with KAT2B/PCAF and EP300/P300. Interacts with PAX5. Interacts (phosphorylated and unphosphorylated) with BLCAP. May interact with NDC80. (Microbial infection) Interacts with adenovirus E1A protein. In terms of assembly, (Microbial infection) Interacts with HPV E7 protein. As to quaternary structure, (Microbial infection) Interacts with SV40 large T antigen. (Microbial infection) Interacts with human cytomegalovirus/HHV-5 proteins UL82 and UL123. In terms of assembly, (Microbial infection) Interacts with molluscum contagiosum virus protein MC007. In terms of processing, phosphorylated by CDK6 and CDK4, and subsequently by CDK2 at Ser-567 in G1, thereby releasing E2F1 which is then able to activate cell growth. Dephosphorylated at the late M phase. SV40 large T antigen, HPV E7 and adenovirus E1A bind to the underphosphorylated, active form of pRb. Phosphorylation at Thr-821 and Thr-826 promotes interaction between the C-terminal domain C and the Pocket domain, and thereby inhibits interactions with heterodimeric E2F/DP transcription factor complexes. Dephosphorylated at Ser-795 by calcineruin upon calcium stimulation. CDK3/cyclin-C-mediated phosphorylation at Ser-807 and Ser-811 is required for G0-G1 transition. Phosphorylated by CDK1 and CDK2 upon TGFB1-mediated apoptosis. Post-translationally, N-terminus is methylated by METTL11A/NTM1. Monomethylation at Lys-810 by SMYD2 enhances phosphorylation at Ser-807 and Ser-811, and promotes cell cycle progression. Monomethylation at Lys-860 by SMYD2 promotes interaction with L3MBTL1. Acetylated during keratinocyte differentiation. Acetylation at Lys-873 and Lys-874 regulates subcellular localization. Can be deacetylated by SIRT1. As to expression, expressed in the retina. Expressed in foreskin keratinocytes (at protein level).

It localises to the nucleus. It is found in the cytoplasm. Its function is as follows. Tumor suppressor that is a key regulator of the G1/S transition of the cell cycle. The hypophosphorylated form binds transcription regulators of the E2F family, preventing transcription of E2F-responsive genes. Both physically blocks E2Fs transactivating domain and recruits chromatin-modifying enzymes that actively repress transcription. Cyclin and CDK-dependent phosphorylation of RB1 induces its dissociation from E2Fs, thereby activating transcription of E2F responsive genes and triggering entry into S phase. RB1 also promotes the G0-G1 transition upon phosphorylation and activation by CDK3/cyclin-C. Directly involved in heterochromatin formation by maintaining overall chromatin structure and, in particular, that of constitutive heterochromatin by stabilizing histone methylation. Recruits and targets histone methyltransferases SUV39H1, KMT5B and KMT5C, leading to epigenetic transcriptional repression. Controls histone H4 'Lys-20' trimethylation. Inhibits the intrinsic kinase activity of TAF1. Mediates transcriptional repression by SMARCA4/BRG1 by recruiting a histone deacetylase (HDAC) complex to the c-FOS promoter. In resting neurons, transcription of the c-FOS promoter is inhibited by BRG1-dependent recruitment of a phospho-RB1-HDAC1 repressor complex. Upon calcium influx, RB1 is dephosphorylated by calcineurin, which leads to release of the repressor complex. (Microbial infection) In case of viral infections, interactions with SV40 large T antigen, HPV E7 protein or adenovirus E1A protein induce the disassembly of RB1-E2F1 complex thereby disrupting RB1's activity. The chain is Retinoblastoma-associated protein (RB1) from Homo sapiens (Human).